Reading from the N-terminus, the 414-residue chain is Esterase FrsA (414 aa).

It belongs to the FrsA family.

The catalysed reaction is a carboxylic ester + H2O = an alcohol + a carboxylate + H(+). Its function is as follows. Catalyzes the hydrolysis of esters. In Escherichia fergusonii (strain ATCC 35469 / DSM 13698 / CCUG 18766 / IAM 14443 / JCM 21226 / LMG 7866 / NBRC 102419 / NCTC 12128 / CDC 0568-73), this protein is Esterase FrsA.